The primary structure comprises 156 residues: 6,7-dimethyl-8-ribityllumazine synthase (156 aa).

5-amino-6-(D-ribitylamino)uracil is bound by residues Phe-22, 56–58 (AME), and 80–82 (AVI). 85 to 86 (ET) lines the (2S)-2-hydroxy-3-oxobutyl phosphate pocket. The Proton donor role is filled by His-88. Phe-113 is a binding site for 5-amino-6-(D-ribitylamino)uracil. Arg-127 contacts (2S)-2-hydroxy-3-oxobutyl phosphate.

This sequence belongs to the DMRL synthase family.

It carries out the reaction (2S)-2-hydroxy-3-oxobutyl phosphate + 5-amino-6-(D-ribitylamino)uracil = 6,7-dimethyl-8-(1-D-ribityl)lumazine + phosphate + 2 H2O + H(+). It participates in cofactor biosynthesis; riboflavin biosynthesis; riboflavin from 2-hydroxy-3-oxobutyl phosphate and 5-amino-6-(D-ribitylamino)uracil: step 1/2. In terms of biological role, catalyzes the formation of 6,7-dimethyl-8-ribityllumazine by condensation of 5-amino-6-(D-ribitylamino)uracil with 3,4-dihydroxy-2-butanone 4-phosphate. This is the penultimate step in the biosynthesis of riboflavin. The sequence is that of 6,7-dimethyl-8-ribityllumazine synthase from Kosmotoga olearia (strain ATCC BAA-1733 / DSM 21960 / TBF 19.5.1).